Reading from the N-terminus, the 154-residue chain is uncharacterized protein (154 aa).

Residue 12–19 (GSSDVGKT) coordinates GTP. Positions 17–112 (GKTTLMENLI…KIPYGIFINK (96 aa)) constitute a G domain.

This sequence to M.thermoautotrophicum MTH765.

This is an uncharacterized protein from Methanocaldococcus jannaschii (strain ATCC 43067 / DSM 2661 / JAL-1 / JCM 10045 / NBRC 100440) (Methanococcus jannaschii).